Here is a 231-residue protein sequence, read N- to C-terminus: Uracil-DNA glycosylase (231 aa).

Catalysis depends on Asp74, which acts as the Proton acceptor.

This sequence belongs to the uracil-DNA glycosylase (UDG) superfamily. UNG family.

The protein localises to the cytoplasm. It catalyses the reaction Hydrolyzes single-stranded DNA or mismatched double-stranded DNA and polynucleotides, releasing free uracil.. Functionally, excises uracil residues from the DNA which can arise as a result of misincorporation of dUMP residues by DNA polymerase or due to deamination of cytosine. The polypeptide is Uracil-DNA glycosylase (Campylobacter jejuni subsp. jejuni serotype O:2 (strain ATCC 700819 / NCTC 11168)).